Reading from the N-terminus, the 215-residue chain is Glutathione S-transferase F10 (215 aa).

Residues Val2–Gly81 enclose the GST N-terminal domain. Glutathione contacts are provided by residues Ala11–Ser12, Gln39–Arg40, Lys52–Ile53, and Glu65–Ser66. Residues Thr88–Val215 form the GST C-terminal domain.

Belongs to the GST superfamily. Phi family. In terms of assembly, interacts with BAK1. In terms of tissue distribution, expressed in roots, stems, floral buds, mature flowers and leaves.

The protein resides in the cytoplasm. The protein localises to the cytosol. The catalysed reaction is RX + glutathione = an S-substituted glutathione + a halide anion + H(+). In vitro, possesses glutathione S-transferase activity toward 1-chloro-2,4-dinitrobenzene (CDNB) and benzyl isothiocyanate (BITC). May be involved in the conjugation of reduced glutathione to a wide number of exogenous and endogenous hydrophobic electrophiles and have a detoxification role against certain herbicides. This chain is Glutathione S-transferase F10, found in Arabidopsis thaliana (Mouse-ear cress).